Here is a 453-residue protein sequence, read N- to C-terminus: F-box protein SKIP14 (453 aa).

An F-box; degenerate domain is found at 34–104 (RKNTGGDASS…NRQQLFAGLS (71 aa)).

In terms of assembly, part of a SCF (ASK-cullin-F-box) protein ligase complex. Interacts with CUL1, SKP1A/ASK1 and SPK1B/ASK2.

Its pathway is protein modification; protein ubiquitination. Component of SCF(ASK-cullin-F-box) E3 ubiquitin ligase complexes, which may mediate the ubiquitination and subsequent proteasomal degradation of target proteins. The chain is F-box protein SKIP14 (SKIP14) from Arabidopsis thaliana (Mouse-ear cress).